Here is a 392-residue protein sequence, read N- to C-terminus: Enoyl-[acyl-carrier-protein] reductase [NADH] (392 aa).

NAD(+) contacts are provided by residues 46–51 (GSSSGY), 72–73 (LE), 108–109 (DA), and 136–137 (VA). Substrate is bound at residue Tyr225. The active-site Proton donor is Tyr235. NAD(+)-binding positions include Lys244 and 273-275 (LVT).

This sequence belongs to the TER reductase family. In terms of assembly, monomer.

It carries out the reaction a 2,3-saturated acyl-[ACP] + NAD(+) = a (2E)-enoyl-[ACP] + NADH + H(+). It participates in lipid metabolism; fatty acid biosynthesis. In terms of biological role, involved in the final reduction of the elongation cycle of fatty acid synthesis (FAS II). Catalyzes the reduction of a carbon-carbon double bond in an enoyl moiety that is covalently linked to an acyl carrier protein (ACP). The protein is Enoyl-[acyl-carrier-protein] reductase [NADH] of Streptomyces avermitilis (strain ATCC 31267 / DSM 46492 / JCM 5070 / NBRC 14893 / NCIMB 12804 / NRRL 8165 / MA-4680).